The chain runs to 391 residues: Cyclin-B1-2 (391 aa).

It belongs to the cyclin family. Cyclin AB subfamily.

The protein is Cyclin-B1-2 (CYCB1-2) of Oryza sativa subsp. japonica (Rice).